Here is a 341-residue protein sequence, read N- to C-terminus: Mitochondrial transcription factor 1 (341 aa).

S-adenosyl-L-methionine contacts are provided by leucine 23, glutamate 77, aspartate 101, and asparagine 137.

Belongs to the class I-like SAM-binding methyltransferase superfamily. rRNA adenine N(6)-methyltransferase family.

It is found in the mitochondrion. Mitochondrial transcription factor that confers selective promoter recognition on the core subunit of the yeast mitochondrial RNA polymerase. Interacts with DNA in a non-specific manner. This chain is Mitochondrial transcription factor 1 (MTF1), found in Saccharomyces paradoxus (Yeast).